A 269-amino-acid chain; its full sequence is Putative phosphatase M6_Spy0533 (269 aa).

The Nucleophile role is filled by aspartate 9. Mg(2+) is bound at residue aspartate 9. Isoleucine 10 provides a ligand contact to phosphate. Aspartate 11 is a Mg(2+) binding site. Residues 43–44 (TG) and lysine 196 contribute to the phosphate site. Aspartate 219 is a binding site for Mg(2+). Asparagine 222 contributes to the phosphate binding site.

Mg(2+) serves as cofactor.

The polypeptide is Putative phosphatase M6_Spy0533 (Streptococcus pyogenes serotype M6 (strain ATCC BAA-946 / MGAS10394)).